A 499-amino-acid chain; its full sequence is Glycerol kinase (499 aa).

Threonine 12 provides a ligand contact to ADP. Positions 12, 13, and 14 each coordinate ATP. Threonine 12 contributes to the sn-glycerol 3-phosphate binding site. Arginine 16 contributes to the ADP binding site. Sn-glycerol 3-phosphate-binding residues include arginine 82, glutamate 83, tyrosine 134, and aspartate 243. Glycerol contacts are provided by arginine 82, glutamate 83, tyrosine 134, aspartate 243, and glutamine 244. ADP-binding residues include threonine 265 and glycine 308. 4 residues coordinate ATP: threonine 265, glycine 308, glutamine 312, and glycine 411. Glycine 411 is an ADP binding site.

It belongs to the FGGY kinase family.

It catalyses the reaction glycerol + ATP = sn-glycerol 3-phosphate + ADP + H(+). The protein operates within polyol metabolism; glycerol degradation via glycerol kinase pathway; sn-glycerol 3-phosphate from glycerol: step 1/1. With respect to regulation, inhibited by fructose 1,6-bisphosphate (FBP). Its function is as follows. Key enzyme in the regulation of glycerol uptake and metabolism. Catalyzes the phosphorylation of glycerol to yield sn-glycerol 3-phosphate. This is Glycerol kinase from Agrobacterium fabrum (strain C58 / ATCC 33970) (Agrobacterium tumefaciens (strain C58)).